We begin with the raw amino-acid sequence, 207 residues long: Pyridoxal 5'-phosphate synthase subunit PdxT (207 aa).

51–53 (GES) serves as a coordination point for L-glutamine. The active-site Nucleophile is C83. L-glutamine contacts are provided by residues R112 and 143-144 (IR). Active-site charge relay system residues include H184 and E186.

The protein belongs to the glutaminase PdxT/SNO family. In terms of assembly, in the presence of PdxS, forms a dodecamer of heterodimers. Only shows activity in the heterodimer.

It catalyses the reaction aldehydo-D-ribose 5-phosphate + D-glyceraldehyde 3-phosphate + L-glutamine = pyridoxal 5'-phosphate + L-glutamate + phosphate + 3 H2O + H(+). The enzyme catalyses L-glutamine + H2O = L-glutamate + NH4(+). Its pathway is cofactor biosynthesis; pyridoxal 5'-phosphate biosynthesis. In terms of biological role, catalyzes the hydrolysis of glutamine to glutamate and ammonia as part of the biosynthesis of pyridoxal 5'-phosphate. The resulting ammonia molecule is channeled to the active site of PdxS. The polypeptide is Pyridoxal 5'-phosphate synthase subunit PdxT (Kineococcus radiotolerans (strain ATCC BAA-149 / DSM 14245 / SRS30216)).